We begin with the raw amino-acid sequence, 345 residues long: Probable aldo-keto reductase 3 (345 aa).

Tyr63 serves as the catalytic Proton donor. Residue His130 participates in substrate binding. 209–219 (SPLGRGFFASG) is a binding site for NADP(+).

It belongs to the aldo/keto reductase family.

The sequence is that of Probable aldo-keto reductase 3 from Arabidopsis thaliana (Mouse-ear cress).